A 305-amino-acid polypeptide reads, in one-letter code: GMP synthase [glutamine-hydrolyzing] subunit B (305 aa).

The 184-residue stretch at 2-185 (VNVDEFIEEA…LDLEEIISER (184 aa)) folds into the GMPS ATP-PPase domain. 29-35 (SGGVDSS) is an ATP binding site.

As to quaternary structure, heterodimer composed of a glutamine amidotransferase subunit (A) and a GMP-binding subunit (B).

The catalysed reaction is XMP + L-glutamine + ATP + H2O = GMP + L-glutamate + AMP + diphosphate + 2 H(+). It functions in the pathway purine metabolism; GMP biosynthesis; GMP from XMP (L-Gln route): step 1/1. Functionally, catalyzes the synthesis of GMP from XMP. The sequence is that of GMP synthase [glutamine-hydrolyzing] subunit B from Haloarcula marismortui (strain ATCC 43049 / DSM 3752 / JCM 8966 / VKM B-1809) (Halobacterium marismortui).